A 167-amino-acid chain; its full sequence is Keratin-associated protein 1-3 (167 aa).

Belongs to the KRTAP type 1 family. In terms of assembly, interacts with hair keratins. In terms of tissue distribution, expressed in the middle/upper portions of the hair cortex, in the region termed the keratogenous zone.

In terms of biological role, in the hair cortex, hair keratin intermediate filaments are embedded in an interfilamentous matrix, consisting of hair keratin-associated proteins (KRTAP), which are essential for the formation of a rigid and resistant hair shaft through their extensive disulfide bond cross-linking with abundant cysteine residues of hair keratins. The matrix proteins include the high-sulfur and high-glycine-tyrosine keratins. The polypeptide is Keratin-associated protein 1-3 (KRTAP1-3) (Homo sapiens (Human)).